We begin with the raw amino-acid sequence, 286 residues long: Shikimate dehydrogenase (NADP(+)) (286 aa).

Shikimate-binding positions include 22–24 (SLS) and T69. K73 (proton acceptor) is an active-site residue. E85 is an NADP(+) binding site. Shikimate-binding residues include N94 and D109. Residues 133 to 137 (GAGGA) and V231 contribute to the NADP(+) site. Y233 is a binding site for shikimate. Residue G254 coordinates NADP(+).

This sequence belongs to the shikimate dehydrogenase family. As to quaternary structure, homodimer.

The enzyme catalyses shikimate + NADP(+) = 3-dehydroshikimate + NADPH + H(+). It participates in metabolic intermediate biosynthesis; chorismate biosynthesis; chorismate from D-erythrose 4-phosphate and phosphoenolpyruvate: step 4/7. Involved in the biosynthesis of the chorismate, which leads to the biosynthesis of aromatic amino acids. Catalyzes the reversible NADPH linked reduction of 3-dehydroshikimate (DHSA) to yield shikimate (SA). The protein is Shikimate dehydrogenase (NADP(+)) of Alkaliphilus metalliredigens (strain QYMF).